The chain runs to 989 residues: MESMKQLKNHNVDLISNNDPLDKNRLLIEDLWESVLREECPNDQANRLMKLKELSYCNQVEEDISRTFKNEIVDIVNSMDLAESISAARAFSLYFQLVNILEQRVEEDRYIQSFTNKNNQKSHDNLDPFAPALARQNAPVTFRELFYRLRKLNVPPGKLEELLQEMDIRLVFTAHPTEIVRHTIRHKQTRVANLLQKIQVEKFLTVEDIKSLKIQLKEEIRLWWRTDELHQFKPSVIDEVDYALHYFQQVLFNAMPQLRGRISSALTENYPDVQMPTESFCTFGSWVGSDRDGNPSVTPEITWRTACYQRKLMLERYISATSNLRDQLSVSMQWSQVSSSLLESLETDRVQFPEIYEARATRYRSEPYRLKLSYILEKLRLTKERNNLLAEAGWKFSLERESDNKNIELVEKLHYRSVDEFTYDLELIKNSLNSTDLTCEAVSKLLTQVHIFGFSLASLDIRQESTRHSDAIQELTNYLELPKKYDQMPEIERIEWLKDELNTKRPLIPAEVSWTKSTEETFSVFKMVKRLQEEFGSRICHSYVISMSHSASDLLEVLLLAKEMGLIDQSSQKSKLLVVPLFETVEDLKRAPEVMEQLFQLDFYRSLLPKVGERFKPIQELMLGYSDSNKDSGFLSSNWEIHRAQIALQNLSSKNNILLRLFHGRGGSVGRGGGPAYQAILAQPSGTLKGRIKITEQGEVLASKYSLPELALYNLETVTTAVIQNSLVINRLDATPEWNDLMTRLAETSRIQYRKLVHENPNLLTFFQEVTPIEEISKLQISSRPARRKKGAKDLSSLRAIPWVFGWTQSRFLLPSWFGVGTALSVELKSDPEQIELLRVLHQRWPFFRMLISKVEMTLSKVDLEVAKYYVDTLGSKENAKSFGDIFDVISKEYNLTKSLVLEITGKNKLLESDRDLRLSVNLRNKTIIPLGFLQVSLLRRLRDQTRQPPISEFLNERNESERAYSRSELLRGALLTINGIAAGMRNTG.

Catalysis depends on residues His-175 and Lys-630.

It belongs to the PEPCase type 1 family. It depends on Mg(2+) as a cofactor.

It carries out the reaction oxaloacetate + phosphate = phosphoenolpyruvate + hydrogencarbonate. Functionally, forms oxaloacetate, a four-carbon dicarboxylic acid source for the tricarboxylic acid cycle. In Prochlorococcus marinus (strain MIT 9515), this protein is Phosphoenolpyruvate carboxylase.